The chain runs to 507 residues: Probable Xaa-Pro aminopeptidase TRV_02643 (507 aa).

Asp275, Asp286, Glu434, and Glu478 together coordinate Mn(2+).

It belongs to the peptidase M24B family. Requires Mn(2+) as cofactor.

The enzyme catalyses Release of any N-terminal amino acid, including proline, that is linked to proline, even from a dipeptide or tripeptide.. Catalyzes the removal of a penultimate prolyl residue from the N-termini of peptides. The polypeptide is Probable Xaa-Pro aminopeptidase TRV_02643 (Trichophyton verrucosum (strain HKI 0517)).